Here is a 367-residue protein sequence, read N- to C-terminus: tRNA/tmRNA (uracil-C(5))-methyltransferase (367 aa).

S-adenosyl-L-methionine contacts are provided by Q190, Y218, N223, E239, and D299. Catalysis depends on C324, which acts as the Nucleophile. The active-site Proton acceptor is E358.

Belongs to the class I-like SAM-binding methyltransferase superfamily. RNA M5U methyltransferase family. TrmA subfamily.

It carries out the reaction uridine(54) in tRNA + S-adenosyl-L-methionine = 5-methyluridine(54) in tRNA + S-adenosyl-L-homocysteine + H(+). The catalysed reaction is uridine(341) in tmRNA + S-adenosyl-L-methionine = 5-methyluridine(341) in tmRNA + S-adenosyl-L-homocysteine + H(+). Functionally, dual-specificity methyltransferase that catalyzes the formation of 5-methyluridine at position 54 (m5U54) in all tRNAs, and that of position 341 (m5U341) in tmRNA (transfer-mRNA). This Erwinia tasmaniensis (strain DSM 17950 / CFBP 7177 / CIP 109463 / NCPPB 4357 / Et1/99) protein is tRNA/tmRNA (uracil-C(5))-methyltransferase.